We begin with the raw amino-acid sequence, 651 residues long: Apical membrane antigen 1-like protein (651 aa).

An N-terminal signal peptide occupies residues Met-1–Ala-41. Positions Thr-42–Pro-81 are cleaved as a propeptide — removed in mature form. The Extracellular segment spans residues Thr-42–Thr-570. 7 disulfides stabilise this stretch: Cys-141-Cys-309, Cys-215-Cys-248, Cys-264-Cys-277, Cys-327-Cys-417, Cys-347-Cys-408, Cys-441-Cys-463, and Cys-453-Cys-475. An N-linked (GlcNAc...) asparagine glycan is attached at Asn-230. A 1; approximate repeat occupies Pro-483–Lys-486. The segment at Pro-483 to Glu-531 is 12 x 4 AA approximate tandem-repeats of P-P-V-E. The span at Pro-483–Pro-547 shows a compositional bias: pro residues. The disordered stretch occupies residues Pro-483 to Gly-567. Repeat copies occupy residues Pro-487–Glu-490, Pro-491–Glu-494, Pro-495–Glu-498, Pro-499–Glu-502, Pro-503–Glu-506, Pro-507–Glu-510, Pro-511–Glu-514, Pro-515–Glu-518, and Pro-519–Glu-522. Residues Pro-523–Glu-527 form an 11; approximate repeat. One copy of the 12; approximate repeat lies at Pro-528–Glu-531. Residues Ala-571 to Val-591 traverse the membrane as a helical segment. The Cytoplasmic portion of the chain corresponds to Gly-592–Phe-651. Residues Arg-598–Phe-651 form a disordered region.

This sequence belongs to the apicomplexan parasites AMA1 family. Proteolytically cleaved within its transmembrane domain, releasing a soluble form from the cell surface.

Its subcellular location is the cell membrane. It localises to the secreted. May play a role in host cell invasion. In Toxoplasma gondii (strain ATCC 50861 / VEG), this protein is Apical membrane antigen 1-like protein.